The following is a 62-amino-acid chain: UPF0434 protein Rpic_2808 (62 aa).

Belongs to the UPF0434 family.

The protein is UPF0434 protein Rpic_2808 of Ralstonia pickettii (strain 12J).